We begin with the raw amino-acid sequence, 336 residues long: 4-hydroxythreonine-4-phosphate dehydrogenase (336 aa).

Residues His-142 and Thr-143 each coordinate substrate. A divalent metal cation-binding residues include His-172, His-217, and His-274. Lys-282, Asn-291, and Arg-300 together coordinate substrate.

The protein belongs to the PdxA family. In terms of assembly, homodimer. The cofactor is Zn(2+). It depends on Mg(2+) as a cofactor. Co(2+) is required as a cofactor.

It localises to the cytoplasm. It catalyses the reaction 4-(phosphooxy)-L-threonine + NAD(+) = 3-amino-2-oxopropyl phosphate + CO2 + NADH. It functions in the pathway cofactor biosynthesis; pyridoxine 5'-phosphate biosynthesis; pyridoxine 5'-phosphate from D-erythrose 4-phosphate: step 4/5. Functionally, catalyzes the NAD(P)-dependent oxidation of 4-(phosphooxy)-L-threonine (HTP) into 2-amino-3-oxo-4-(phosphooxy)butyric acid which spontaneously decarboxylates to form 3-amino-2-oxopropyl phosphate (AHAP). The polypeptide is 4-hydroxythreonine-4-phosphate dehydrogenase (Trichlorobacter lovleyi (strain ATCC BAA-1151 / DSM 17278 / SZ) (Geobacter lovleyi)).